The sequence spans 1177 residues: MKKLLKKSKFWWFLLCGLSVSTILVACSTPTNSALQTVFSPTSTNFFHGQKGSLKEGLITALKTPSANKHFVIGPLLKALEAWYENNEDKAINKFLKDTKKNVDDQYKNTVNGLISPPRNRAVFIQQDLLDKSGGSEASWKSQQLFNQLISDFTAKLFAKDFLVYKPNGQLSTGPYIYDELSQPEKWKDFGFQEPRFSETNDALFAKLQAQIFNLWVEYTDPTLISQATFKYAAPQQGLGQVYNTEKLKDKLTPSYAFPFFPKDGEIPQNQNVGNKRWEQLIEGKDGLNTAKTGLEKYILDQNQGNLIDFPTTLSDNTQTKQIVDSLNIVDQLEAANLGASLNLKLDLLNQDKDQLPTIKELNKELNNTIVVESTKIENHTKSNTLFCEHNTTDSSQNNLKSLIKDAFISSNDSSNLGKLAKQIHQTTTSDMMVSTKASSSTTSSYLVWDAAIPNNKTNNGASTVSANCANATVQNTSHNSNNQLKLRLVRNGEGVAVIGIDGGSYYLTKNSSSKTERDIEKQKQFLMWRAFQAKTNTFKNSLYSFSFPLNETLKTWFEKNQELILVNALINTDFQKKDKGSDAMQKAFNDYKELMQKFAPVALATNVIRDLFLQMDALDNKLTSRTTELNTNVNQINPTPWLNGLSSHLPYVRKSGHYEKLNNYFLFLITKTLWKKVGSEKINISENNNKLKTTKADVDKIRDEILSDINNKVTEFVNQLKVTEKSKPNFSNIILVDINNDQSLTNSANWSLNALLDVTTVNPLSFALLKNAFTSNQQFEKAKKLFEEIKSKNGSSSTSSSSDADSLAKVISNYYYMTWSKLTNKAMYGNPNNGNIDELFKKAFLESVDESGFNVNFKAVIDHYRFIFTLQWLIENNLKNFKDILQANLKYGEIAYIAYDKNIISNNTNNPQGIFGSVFNYENDEHATTANANQTIDPNNFFFKTKTSPNTTPATTMLSTRQAVSTSNNGTYGFTGLNTTNSSMLENNTNQALLNHIAANSLKQYGSKDDLKKFISETKDQLVLDNIARQLSRLTPSSSSSNGKTLSAYFQVDAINNSALDFKAKQALLLAVLDQYSSYFNSSNSPSISKRSTQTNQKFSEFNFGGDSYNYLQFTKSDIDSLSLTSSTNIESDIVAALVLFQASDTGTQQLALSAIEKPQFRIGDKRIQSGLNLLK.

An N-terminal signal peptide occupies residues Met1–Ala26. Cys27 carries N-palmitoyl cysteine lipidation. The S-diacylglycerol cysteine moiety is linked to residue Cys27.

Belongs to the MG307/MG309/MG338 family.

It is found in the cell membrane. This is an uncharacterized protein from Mycoplasma genitalium (strain ATCC 33530 / DSM 19775 / NCTC 10195 / G37) (Mycoplasmoides genitalium).